The sequence spans 166 residues: Small ribosomal subunit protein uS5 (166 aa).

The S5 DRBM domain occupies 12–75; it reads YIEKLVQVNR…EAARRNMIQV (64 aa).

This sequence belongs to the universal ribosomal protein uS5 family. In terms of assembly, part of the 30S ribosomal subunit. Contacts proteins S4 and S8.

In terms of biological role, with S4 and S12 plays an important role in translational accuracy. Its function is as follows. Located at the back of the 30S subunit body where it stabilizes the conformation of the head with respect to the body. The chain is Small ribosomal subunit protein uS5 from Pseudomonas fluorescens (strain SBW25).